The primary structure comprises 258 residues: Small ribosomal subunit protein uS2 (258 aa).

It belongs to the universal ribosomal protein uS2 family.

The sequence is that of Small ribosomal subunit protein uS2 from Leuconostoc citreum (strain KM20).